A 224-amino-acid chain; its full sequence is Putative cobalt transport protein CbiM (224 aa).

The next 6 membrane-spanning stretches (helical) occupy residues 8–28, 41–61, 75–95, 108–128, 138–158, and 169–189; these read LPPLWCLIYYIICIPFIVYGI, AMPMLALSGAFMFILSSLKMP, FGAVFFGPAVVGVLSVIVLVF, LGANVLSMGIIGPLCGYAVWL, EIAMFFTAFVADLMTYVVTAI, and FFTALVTFLGIFAVTQIPLAI.

This sequence belongs to the CbiM family. Forms an energy-coupling factor (ECF) transporter complex composed of an ATP-binding protein (A component, CbiO), a transmembrane protein (T component, CbiQ) and 2 possible substrate-capture proteins (S components, CbiM and CbiN) of unknown stoichimetry.

It localises to the cell membrane. The protein operates within cofactor biosynthesis; adenosylcobalamin biosynthesis. In terms of biological role, part of the energy-coupling factor (ECF) transporter complex CbiMNOQ involved in cobalt import. The protein is Putative cobalt transport protein CbiM of Methanosphaera stadtmanae (strain ATCC 43021 / DSM 3091 / JCM 11832 / MCB-3).